A 571-amino-acid polypeptide reads, in one-letter code: Phosphoenolpyruvate-protein phosphotransferase (571 aa).

Catalysis depends on His-189, which acts as the Tele-phosphohistidine intermediate. Arg-296 and Arg-332 together coordinate phosphoenolpyruvate. The Mg(2+) site is built by Glu-431 and Asp-455. Residues 454–455 and Arg-465 contribute to the phosphoenolpyruvate site; that span reads ND. The active-site Proton donor is the Cys-502.

This sequence belongs to the PEP-utilizing enzyme family. Homodimer. Requires Mg(2+) as cofactor.

It localises to the cytoplasm. It carries out the reaction L-histidyl-[protein] + phosphoenolpyruvate = N(pros)-phospho-L-histidyl-[protein] + pyruvate. In terms of biological role, general (non sugar-specific) component of the phosphoenolpyruvate-dependent sugar phosphotransferase system (sugar PTS). This major carbohydrate active-transport system catalyzes the phosphorylation of incoming sugar substrates concomitantly with their translocation across the cell membrane. Enzyme I transfers the phosphoryl group from phosphoenolpyruvate (PEP) to the phosphoryl carrier protein (HPr). This Buchnera aphidicola subsp. Acyrthosiphon pisum (strain APS) (Acyrthosiphon pisum symbiotic bacterium) protein is Phosphoenolpyruvate-protein phosphotransferase (ptsI).